A 241-amino-acid polypeptide reads, in one-letter code: Ubiquinone biosynthesis O-methyltransferase (241 aa).

Residues R46, G66, D87, and M131 each coordinate S-adenosyl-L-methionine.

The protein belongs to the methyltransferase superfamily. UbiG/COQ3 family.

The enzyme catalyses a 3-demethylubiquinol + S-adenosyl-L-methionine = a ubiquinol + S-adenosyl-L-homocysteine + H(+). It catalyses the reaction a 3-(all-trans-polyprenyl)benzene-1,2-diol + S-adenosyl-L-methionine = a 2-methoxy-6-(all-trans-polyprenyl)phenol + S-adenosyl-L-homocysteine + H(+). It functions in the pathway cofactor biosynthesis; ubiquinone biosynthesis. O-methyltransferase that catalyzes the 2 O-methylation steps in the ubiquinone biosynthetic pathway. In Bordetella parapertussis (strain 12822 / ATCC BAA-587 / NCTC 13253), this protein is Ubiquinone biosynthesis O-methyltransferase.